The following is a 245-amino-acid chain: 1-(5-phosphoribosyl)-5-[(5-phosphoribosylamino)methylideneamino] imidazole-4-carboxamide isomerase (245 aa).

Asp8 acts as the Proton acceptor in catalysis. The active-site Proton donor is Asp129.

This sequence belongs to the HisA/HisF family.

The protein localises to the cytoplasm. The enzyme catalyses 1-(5-phospho-beta-D-ribosyl)-5-[(5-phospho-beta-D-ribosylamino)methylideneamino]imidazole-4-carboxamide = 5-[(5-phospho-1-deoxy-D-ribulos-1-ylimino)methylamino]-1-(5-phospho-beta-D-ribosyl)imidazole-4-carboxamide. Its pathway is amino-acid biosynthesis; L-histidine biosynthesis; L-histidine from 5-phospho-alpha-D-ribose 1-diphosphate: step 4/9. The sequence is that of 1-(5-phosphoribosyl)-5-[(5-phosphoribosylamino)methylideneamino] imidazole-4-carboxamide isomerase from Rhodopseudomonas palustris (strain BisB18).